A 314-amino-acid chain; its full sequence is Oxidoreductase poxI (314 aa).

Belongs to the NmrA-type oxidoreductase family. Isoflavone reductase subfamily.

The protein operates within secondary metabolite biosynthesis. Functionally, oxidoreductase; part of the gene cluster that mediates the biosynthesis of oxaleimides, cytotoxic compounds containing an unusual disubstituted succinimide moiety. The first step of the pathway is provided by the HR-PKS poxF that serves in a new mode of collaborative biosynthesis with the PKS-NRPS poxE, by providing the olefin containing amino acid substrate via the synthesis of an ACP-bound dec-4-enoate. The cytochrome P450 monooxygenase poxM-catalyzed oxidation at the alpha-position creates the enzyme-bound 2-hydroxydec-4-enoyl-ACP thioester, which may be prone to spontaneous hydrolysis to yield 2-hydroxydec-4-enoic acid due to increased electrophilicity of the carbonyl. 2-hydroxydec-4-enoic acid can then be further oxidized by poxM to yield the alpha-ketoacid 2-oxodec-4-enoicacid, which is reductively aminated by the aminotransferase poxL to yield (S,E)-2-aminodec-4-enoic acid. The Hybrid PKS-NRPS synthetase poxE then performs condensation between the octaketide product of its PKS modules and the amino group of (S,E)-2-aminodec-4-enoic acid which is activated and incorporated by the adenylation domain. The resulting aminoacyl product can be cyclized by the Diels-Alderase PoxQ and reductively released by the reductive (R) domain of poxE to yield an aldehyde intermediate. The released aldehyde is then substrate for a Knoevenagel condensation by the hydrolyase poxO followed by an oxidation at the 5-position of the pyrrolidone ring. The presence of the olefin from the amino acid building block allows for migration of the substituted allyl group to occur. This allylic transposition reaction takes place in a conjugate addition, semipinacol-like fashion to yield a succinimide intermediate. Iterative two-electron oxidations of the C7 methyl of the succinimide intermediate to the carboxylic acid can be catalyzed by one of two remaining cytochrome P450 monooxygenasess poxC or poxD to yield oxaleimide A. Subsequent oxidation yields the maleimide scaffold oxaleimide I. Both oxaleimide A and oxaleimide I can undergo oxidative modifications in the decalin ring to yield the series of products oxaleimides B to H. The protein is Oxidoreductase poxI of Penicillium oxalicum (strain 114-2 / CGMCC 5302) (Penicillium decumbens).